The primary structure comprises 1134 residues: Centrosomal protein of 131 kDa (1134 aa).

Disordered regions lie at residues 111-131, 168-208, 286-306, 425-455, and 492-528; these read NSSE…EEGE, DLPG…PLTL, ESSK…APSS, VGKK…TINP, and DQKQ…EDSR. The segment covering 180–196 has biased composition (basic and acidic residues); it reads MHADLDSSDCDNDKQEV. Residues 494 to 504 show a composition bias toward basic and acidic residues; sequence KQYDGKHKPGL. Polar residues predominate over residues 513–522; that stretch reads NDTASQLSLK. A coiled-coil region spans residues 732–1131; the sequence is LESQNQAWEH…AVIRQQRKDY (400 aa).

Belongs to the CEP131 family. In terms of tissue distribution, expressed in chordotonal (Ch) neuronal precursors. Expressed in ciliated cells, like sensory neurons and spermatids.

It localises to the cytoplasm. The protein resides in the cytoskeleton. It is found in the microtubule organizing center. Its subcellular location is the centrosome. The protein localises to the cilium basal body. It localises to the centriole. Its function is as follows. Cilium-specific protein with a role in cilium/flagellum formation. May be involved in transport of components into the growing cilium. In germ cells and sensory neurons, plays a role with Cby in the building of the transition zone necessary for the formation of the ciliary cap and for the correct elongation of the axoneme. This Drosophila melanogaster (Fruit fly) protein is Centrosomal protein of 131 kDa.